Here is a 124-residue protein sequence, read N- to C-terminus: Fluoride-specific ion channel FluC (124 aa).

The next 4 helical transmembrane spans lie at isoleucine 5 to tryptophan 25, threonine 38 to leucine 58, glycine 69 to leucine 89, and leucine 99 to leucine 119. 2 residues coordinate Na(+): glycine 76 and threonine 79.

The protein belongs to the fluoride channel Fluc/FEX (TC 1.A.43) family.

The protein resides in the cell inner membrane. It catalyses the reaction fluoride(in) = fluoride(out). Its activity is regulated as follows. Na(+) is not transported, but it plays an essential structural role and its presence is essential for fluoride channel function. Fluoride-specific ion channel. Important for reducing fluoride concentration in the cell, thus reducing its toxicity. The sequence is that of Fluoride-specific ion channel FluC from Pseudomonas syringae pv. syringae (strain B728a).